The primary structure comprises 157 residues: Snaclec A16 (157 aa).

The signal sequence occupies residues 1 to 23 (MGRLISVSFGLLVVFLSLSGTGA). Cystine bridges form between Cys-27–Cys-38, Cys-55–Cys-149, and Cys-124–Cys-141. Positions 34–150 (YEGHCYKVFN…CELAYHFICM (117 aa)) constitute a C-type lectin domain.

The protein belongs to the snaclec family. Heterodimer; disulfide-linked. As to expression, expressed by the venom gland.

It localises to the secreted. Functionally, interferes with one step of hemostasis (modulation of platelet aggregation, or coagulation cascade, for example). The sequence is that of Snaclec A16 from Macrovipera lebetinus (Levantine viper).